The following is an 842-amino-acid chain: Unconventional myosin-Ia (842 aa).

Positions 1-686 (GVEDLILLEP…TLFYLEEQRR (686 aa)) constitute a Myosin motor domain. Residue 93–100 (GESGAGKT) participates in ATP binding. The segment at 563–585 (VAILMKNLYSKNPNYIRCIKPND) is actin-binding. IQ domains are found at residues 689 to 712 (LQQLATLIQKVYRGWRCRTHYQQM), 713 to 733 (RKSQILLSAWFRGNKQKKHYG), and 735 to 764 (IRSSVLLIQAFVRGWKARKNYRKYFRSGAR).

It belongs to the TRAFAC class myosin-kinesin ATPase superfamily. Myosin family. In terms of processing, phosphorylated by ALPK1.

Functionally, involved in directing the movement of organelles along actin filaments. The chain is Unconventional myosin-Ia (Myo1a) from Rattus norvegicus (Rat).